Here is a 224-residue protein sequence, read N- to C-terminus: tRNA (guanine-N(7)-)-methyltransferase (224 aa).

E56, E81, D108, and D131 together coordinate S-adenosyl-L-methionine. The active site involves D131. Substrate contacts are provided by residues K135, D167, and 202 to 205 (TKFE).

Belongs to the class I-like SAM-binding methyltransferase superfamily. TrmB family.

It catalyses the reaction guanosine(46) in tRNA + S-adenosyl-L-methionine = N(7)-methylguanosine(46) in tRNA + S-adenosyl-L-homocysteine. It participates in tRNA modification; N(7)-methylguanine-tRNA biosynthesis. Its function is as follows. Catalyzes the formation of N(7)-methylguanine at position 46 (m7G46) in tRNA. In Nitrosomonas europaea (strain ATCC 19718 / CIP 103999 / KCTC 2705 / NBRC 14298), this protein is tRNA (guanine-N(7)-)-methyltransferase.